The chain runs to 2070 residues: HEAT repeat-containing protein 5B (2070 aa).

HEAT repeat units lie at residues 848-885 (EVRKSALTLVMGALDNPNPILRCAAGEALGRMAQVVGE), 1062-1099 (VNLSSLVPSLCVHLCSSHLLLRRAAVACLRQLAQREAA), and 1290-1327 (LHLSDLIRMAFMAATDHSNQLRMAGLQALEDIIKKFAS). Phosphoserine is present on serine 1737.

Belongs to the HEATR5 family. As to quaternary structure, self-associates. Component of the aftiphilin/p200/gamma-synergin complex, at least composed of AFTPH/aftiphilin, HEATR5B/p200a and SYNRG/gamma-synergin, which plays a role in the AP1G1/AP-1-mediated protein trafficking from early to recycling endosomes and between the trans-Golgi network (TGN) and endosomes. Within the complex interacts with AFTPH/aftiphilin and SYNRG/gamma-synergin; the interactions are direct. Interacts with GGA1.

It localises to the cytoplasm. Its subcellular location is the perinuclear region. The protein resides in the cytoplasmic vesicle. The protein localises to the clathrin-coated vesicle. In terms of biological role, component of clathrin-coated vesicles. Component of the aftiphilin/p200/gamma-synergin complex, which plays roles in AP1G1/AP-1-mediated protein trafficking including the trafficking of transferrin from early to recycling endosomes, and the membrane trafficking of furin and the lysosomal enzyme cathepsin D between the trans-Golgi network (TGN) and endosomes. In Mus musculus (Mouse), this protein is HEAT repeat-containing protein 5B (Heatr5b).